Reading from the N-terminus, the 446-residue chain is Chromosomal replication initiator protein DnaA (446 aa).

Residues 1 to 72 are domain I, interacts with DnaA modulators; it reads MKNISDLWNQ…ADTIYDLTGE (72 aa). Residues 72-109 are domain II; sequence EELSIKFVIPQNQNEEDFMPKSPIKKMSKEEPADFPQN. Positions 110 to 326 are domain III, AAA+ region; that stretch reads MLNPKYTFDT…GALIRVVAYS (217 aa). Positions 154, 156, 157, and 158 each coordinate ATP. The interval 327-446 is domain IV, binds dsDNA; the sequence is SLINKDINAD…QIKEIKEQLR (120 aa).

Belongs to the DnaA family. Oligomerizes as a right-handed, spiral filament on DNA at oriC.

Its subcellular location is the cytoplasm. Plays an essential role in the initiation and regulation of chromosomal replication. ATP-DnaA binds to the origin of replication (oriC) to initiate formation of the DNA replication initiation complex once per cell cycle. Binds the DnaA box (a 9 base pair repeat at the origin) and separates the double-stranded (ds)DNA. Forms a right-handed helical filament on oriC DNA; dsDNA binds to the exterior of the filament while single-stranded (ss)DNA is stabiized in the filament's interior. The ATP-DnaA-oriC complex binds and stabilizes one strand of the AT-rich DNA unwinding element (DUE), permitting loading of DNA polymerase. After initiation quickly degrades to an ADP-DnaA complex that is not apt for DNA replication. Binds acidic phospholipids. This is Chromosomal replication initiator protein DnaA from Bacillus licheniformis (strain ATCC 14580 / DSM 13 / JCM 2505 / CCUG 7422 / NBRC 12200 / NCIMB 9375 / NCTC 10341 / NRRL NRS-1264 / Gibson 46).